A 350-amino-acid polypeptide reads, in one-letter code: UBX domain-containing protein 2B (350 aa).

The span at 1 to 29 (MEERENSEEGDDGAGEEEEEDQGSGEDGG) shows a compositional bias: acidic residues. Positions 1–46 (MEERENSEEGDDGAGEEEEEDQGSGEDGGEVGAEREQEAELKDSLR) are disordered. Residues 32-45 (GAEREQEAELKDSL) are compositionally biased toward basic and acidic residues. An SEP domain is found at 160-225 (EIQILLKLWS…MEDHQDQEYI (66 aa)). One can recognise a UBX domain in the interval 271–348 (EHVPTTKIQI…DILNTVILQR (78 aa)).

This sequence belongs to the NSFL1C family.

The protein resides in the nucleus. Its subcellular location is the cytoplasm. It localises to the cytosol. It is found in the endoplasmic reticulum. The protein localises to the golgi apparatus. The protein resides in the cytoskeleton. Its subcellular location is the microtubule organizing center. It localises to the centrosome. In terms of biological role, adapter protein required for Golgi and endoplasmic reticulum biogenesis. Involved in Golgi and endoplasmic reticulum maintenance during interphase and in their reassembly at the end of mitosis. Regulates the centrosomal levels of kinase aurka-a/Aurora A during mitotic progression by promoting aurka-a removal from centrosomes in prophase. Also, regulates spindle orientation during mitosis. In Xenopus laevis (African clawed frog), this protein is UBX domain-containing protein 2B (ubxn2b).